A 294-amino-acid polypeptide reads, in one-letter code: Putative HTH-type transcriptional regulatory protein STK_12680 (294 aa).

The 53-residue stretch at 123–175 (LKKKREEMGLSLGEVAQALGVSRISIYDYEREDSYVSIDIAEKLVELFGDDIL) folds into the HTH cro/C1-type domain. Positions 134–153 (LGEVAQALGVSRISIYDYER) form a DNA-binding region, H-T-H motif.

This chain is Putative HTH-type transcriptional regulatory protein STK_12680, found in Sulfurisphaera tokodaii (strain DSM 16993 / JCM 10545 / NBRC 100140 / 7) (Sulfolobus tokodaii).